The chain runs to 329 residues: MDGQSEEVDALVQKITGLHAAIAKLPSLSPSPDVDALFTDLVTACVPPSPVDVTKLAPEAQAMREGLIRLCSEAEGKLEAHYSDMLAAFDNPLDHLGVFPYYSNYINLSKLEYELLARYVPGRHRPARVAFIGSGPLPFSSYVLAARHLPDTVFDNYDLCGAANDRATRLFRADKDVGARMSFHTADVADLTDELATYDVVFLAALVGMAAEDKAKVIAHLGAHMADGAALVARHGARGFLYPIVDPQDIGRGGFEVLAVCHPDDDVVNSVIIAQKSNDVHEYGLGSGRGGRYARGTVVPVVSPPCRFGEMVADVTQKREEFANAEVAF.

Belongs to the nicotianamine synthase (NAS)-like family.

It catalyses the reaction 3 S-adenosyl-L-methionine = nicotianamine + 3 S-methyl-5'-thioadenosine + 3 H(+). Synthesizes nicotianamine, a polyamine that is the first intermediate in the synthesis of the phytosiderophores of the mugineic acid type found in gramineae which serves as a sensor for the physiological iron status within the plant, and/or might be involved in the transport of iron. The sequence is that of Probable nicotianamine synthase 4 (NAS4) from Hordeum vulgare (Barley).